The primary structure comprises 129 residues: UPF0212 protein MM_2357 (129 aa).

Belongs to the UPF0212 family.

The protein is UPF0212 protein MM_2357 of Methanosarcina mazei (strain ATCC BAA-159 / DSM 3647 / Goe1 / Go1 / JCM 11833 / OCM 88) (Methanosarcina frisia).